Here is a 201-residue protein sequence, read N- to C-terminus: LexA repressor 1 (201 aa).

Residues 27-47 constitute a DNA-binding region (H-T-H motif); that stretch reads LAEIAQAFGFASRNAAQKHVQ. Residues serine 122 and lysine 159 each act as for autocatalytic cleavage activity in the active site.

The protein belongs to the peptidase S24 family. Homodimer.

It catalyses the reaction Hydrolysis of Ala-|-Gly bond in repressor LexA.. Represses a number of genes involved in the response to DNA damage (SOS response), including recA and lexA. In the presence of single-stranded DNA, RecA interacts with LexA causing an autocatalytic cleavage which disrupts the DNA-binding part of LexA, leading to derepression of the SOS regulon and eventually DNA repair. The sequence is that of LexA repressor 1 from Xanthomonas axonopodis pv. citri (strain 306).